Consider the following 612-residue polypeptide: UvrABC system protein C (612 aa).

In terms of domain architecture, GIY-YIG spans 21–99 (KLPGVYQMYD…IKSQKPPFNI (79 aa)). The UVR domain occupies 209-244 (EVLQQELQVEMEQASQALDFERAVVVRDQITDLRQV).

It belongs to the UvrC family. In terms of assembly, interacts with UvrB in an incision complex.

It localises to the cytoplasm. The UvrABC repair system catalyzes the recognition and processing of DNA lesions. UvrC both incises the 5' and 3' sides of the lesion. The N-terminal half is responsible for the 3' incision and the C-terminal half is responsible for the 5' incision. The sequence is that of UvrABC system protein C from Saccharophagus degradans (strain 2-40 / ATCC 43961 / DSM 17024).